The primary structure comprises 298 residues: 3-sulfolactaldehyde reductase (298 aa).

Residues 11 to 12 (QM), D31, L65, and T96 contribute to the NAD(+) site. 2,3-dihydroxypropane-1-sulfonate is bound at residue R123. Residue K171 is part of the active site. Residue 174–178 (NNYMS) participates in 2,3-dihydroxypropane-1-sulfonate binding. An NAD(+)-binding site is contributed by K240.

This sequence belongs to the HIBADH-related family. 3-sulfolactaldehyde reductase subfamily. As to quaternary structure, homotetramer. Dimer of dimers.

It catalyses the reaction (2S)-3-sulfopropanediol + NAD(+) = (2S)-3-sulfolactaldehyde + NADH + H(+). It carries out the reaction 4-hydroxybutanoate + NAD(+) = succinate semialdehyde + NADH + H(+). Its activity is regulated as follows. Inhibited by the NADH analogs tetrahydro-NADH and hexahydro-NADH. Reduces 3-sulfolactaldehyde (SLA) to 2,3-dihydroxypropane 1-sulfonate (DHPS). Metabolite profiling studies showed that the enzyme also catalyzes in vitro the NADH-dependent reduction of succinic semialdehyde (SSA) to 4-hydroxybutyrate (GHB), and that it could be involved in the metabolism of SSA, and other potentially toxic intermediates that may accumulate under stress conditions. However, the enzyme exhibits a 42,000-fold greater catalytic efficiency for the reduction of SLA over SSA. Shows no detectable activity on the analogous glycolytic intermediate glyceraldehyde-3-phosphate. The chain is 3-sulfolactaldehyde reductase (yihU) from Escherichia coli (strain K12).